A 196-amino-acid chain; its full sequence is UMP-CMP kinase (196 aa).

13-18 (GAGKGT) contacts ATP. Serine 33 is modified (phosphoserine). Residues 33 to 63 (SAGELLRDERKNPDSQYGELIEKYIKEGKIV) are NMP. Residue arginine 39 participates in a ribonucleoside 5'-phosphate binding. Residues lysine 43 and lysine 55 each carry the N6-acetyllysine modification. 61–63 (KIV) is a binding site for a ribonucleoside 5'-phosphate. Residue lysine 73 forms a Glycyl lysine isopeptide (Lys-Gly) (interchain with G-Cter in SUMO2) linkage. Residue 93-96 (GFPR) coordinates a ribonucleoside 5'-phosphate. A CMP-binding site is contributed by asparagine 100. The residue at position 106 (lysine 106) is an N6-succinyllysine. The segment at 133 to 143 (ERGKSSGRSDD) is LID. Arginine 134 serves as a coordination point for ATP. 2 residues coordinate a ribonucleoside 5'-phosphate: arginine 140 and arginine 151. Lysine 179 is an ATP binding site. Residue serine 180 is modified to Phosphoserine.

It belongs to the adenylate kinase family. UMP-CMP kinase subfamily. Monomer. Mg(2+) is required as a cofactor. Ubiquitously expressed.

The protein localises to the nucleus. It localises to the cytoplasm. It catalyses the reaction CMP + ATP = CDP + ADP. It carries out the reaction dCMP + ATP = dCDP + ADP. The catalysed reaction is UMP + ATP = UDP + ADP. The enzyme catalyses a 2'-deoxyribonucleoside 5'-diphosphate + ATP = a 2'-deoxyribonucleoside 5'-triphosphate + ADP. It catalyses the reaction a ribonucleoside 5'-diphosphate + ATP = a ribonucleoside 5'-triphosphate + ADP. Its function is as follows. Catalyzes the phosphorylation of pyrimidine nucleoside monophosphates at the expense of ATP. Plays an important role in de novo pyrimidine nucleotide biosynthesis. Has preference for UMP and CMP as phosphate acceptors. Also displays broad nucleoside diphosphate kinase activity. The sequence is that of UMP-CMP kinase from Homo sapiens (Human).